The primary structure comprises 318 residues: Olfactory receptor 13C5 (318 aa).

The Extracellular portion of the chain corresponds to 1-25 (MEWENHTILVEFFLKGLSGHPRLEL). N-linked (GlcNAc...) asparagine glycosylation occurs at N5. Residues 26 to 46 (LFFVLIFIMYVVILLGNGTLI) traverse the membrane as a helical segment. The Cytoplasmic portion of the chain corresponds to 47–54 (LISILDPH). A helical membrane pass occupies residues 55-75 (LHTPMYFFLGNLSFLDICYTT). Over 76–99 (TSIPSTLVSFLSERKTISLSGCAV) the chain is Extracellular. C97 and C189 form a disulfide bridge. The helical transmembrane segment at 100–120 (QMFLSLAMGTTECVLLGVMAF) threads the bilayer. Residues 121 to 139 (DRYVAICNPLRYPIIMSKD) are Cytoplasmic-facing. The helical transmembrane segment at 140–160 (AYVPMAAGSWIIGAVNSAVQT) threads the bilayer. Residues 161-197 (VFVVQLPFCRNNIINHFTCEILAVMKLACADISGNEF) lie on the Extracellular side of the membrane. The chain crosses the membrane as a helical span at residues 198–217 (ILLVTTTLFLLTPLLLIIVS). At 218–237 (YTLIILSIFKISSSEGRSKP) the chain is on the cytoplasmic side. A helical transmembrane segment spans residues 238-258 (SSTCSARLTVVITFCGTIFLM). Residues 259-277 (YMKPKSQETLNSDDLDATD) lie on the Extracellular side of the membrane. A helical membrane pass occupies residues 278–298 (KLIFIFYRVMTPMMNPLIYSL). Residues 299 to 318 (RNKDVKEAVKHLLRRKNFNK) lie on the Cytoplasmic side of the membrane.

This sequence belongs to the G-protein coupled receptor 1 family.

It is found in the cell membrane. In terms of biological role, odorant receptor. The polypeptide is Olfactory receptor 13C5 (OR13C5) (Homo sapiens (Human)).